Consider the following 1045-residue polypeptide: Putative sodium-coupled neutral amino acid transporter 10 (1045 aa).

10 helical membrane-spanning segments follow: residues 8-28 (LIMN…PFCF), 33-53 (ILLG…SCMF), 85-105 (SMIG…GDLG), 117-137 (VSEG…VLPL), 150-170 (FSAM…LSSF), 226-246 (IFAL…FFGY), 269-289 (MIRV…ILPC), 320-340 (ILTL…PNVE), 342-362 (ILGL…PALI), and 375-395 (FILG…LTVT). Composition is skewed to basic and acidic residues over residues 412–453 (KEEK…EEQI), 460–479 (PQKE…RPDQ), and 503–546 (VDEK…DQAE). Disordered stretches follow at residues 412 to 584 (KEEK…EQPP) and 606 to 658 (EIAE…AEAG). Residues 564–573 (NDPNKQQLVN) are compositionally biased toward polar residues. The span at 627–658 (PIKDEKNEQIPGDPGKESHVEPKAEDNQAEAG) shows a compositional bias: basic and acidic residues.

It belongs to the amino acid/polyamine transporter 2 family.

The protein resides in the membrane. Its function is as follows. Putative sodium-dependent amino acid/proton antiporter. This is Putative sodium-coupled neutral amino acid transporter 10 (slc38a10) from Xenopus laevis (African clawed frog).